The chain runs to 482 residues: Ras GTPase-activating protein-binding protein 2 (482 aa).

One can recognise an NTF2 domain in the interval 11 to 133 (VGREFVRQYY…FYVHNDMFRY (123 aa)). Residues 140–158 (DSEPELDEESEDEVEEEQE) are compositionally biased toward acidic residues. 2 disordered regions span residues 140-171 (DSEPELDEESEDEVEEEQEERQPSPEPVQENA) and 187-318 (EPLE…EQND). 3 positions are modified to phosphoserine: serine 141, serine 149, and serine 225. The segment at 142–220 (EPELDEESED…PQVEEKNLEE (79 aa)) is acidic disordered region. The segment covering 191–225 (ESSHEPEPEPESETKTEELKPQVEEKNLEELEEKS) has biased composition (basic and acidic residues). Threonine 227 bears the Phosphothreonine mark. Serine 235 is subject to Phosphoserine. Residues 247–264 (ASVTSKNLPPSGTVSSSG) show a composition bias toward polar residues. Lysine 281 is covalently cross-linked (Glycyl lysine isopeptide (Lys-Gly) (interchain with G-Cter in SUMO2)). Residues 290–300 (RVREQRPRERP) show a composition bias toward basic and acidic residues. The RRM domain occupies 331–409 (HQLFVGNLPH…VRLNVEEKKT (79 aa)). The residue at position 392 (lysine 392) is an N6-succinyllysine. Residues 404–476 (VEEKKTRAAR…GRGTGQMEGR (73 aa)) form an RG-rich region region. The span at 408–432 (KTRAARERETRGGGDDRRDIRRNDR) shows a compositional bias: basic and acidic residues. The disordered stretch occupies residues 408–482 (KTRAARERET…MEGRFTGQRR (75 aa)). The segment covering 433–445 (GPGGPRGIVGGGM) has biased composition (gly residues). Arginine 457 carries the post-translational modification Omega-N-methylarginine. Serine 466 bears the Phosphoserine mark. At arginine 468 the chain carries Omega-N-methylarginine.

Forms homooligomers. Forms heterodimers with G3BP1. Interacts with NFKBIA (via N-terminus). Interacts (via NTF2 domain) with USP10; inhibiting stress granule formation. Interacts (via NTF2 domain) with CAPRIN1; promoting stress granule formation. Associates (via RG-rich region) with 40S ribosome subunits. Interacts with PABPC1. In terms of assembly, (Microbial infection) Interacts with non-structural protein 3 (via C-terminus) of Sindbis virus and Semliki forest virus; this interaction inhibits the formation of host stress granules on viral mRNAs and the nsp3-G3BP2 complexes bind viral RNAs and probably orchestrate the assembly of viral replication complexes. Post-translationally, (Microbial infection) Cleaved by foot-and-mouth disease virus leader protease; this cleavage suppresses the formation of cytoplasmic stress granules.

It is found in the cytoplasm. The protein resides in the stress granule. Under physiological conditions, G3BP2 adopts a compact state that is stabilized by intramolecular interactions between the RG-rich and the acidic regions that inhibit phase separation. Upon stress, polysomes disassemble and mRNAs are released in an unfolded protein-free state. Binding of unfolded mRNA to G3BP2 outcompetes the intramolecular interactions and RNA-bound G3BP2 adopts an expanded conformation in which the RG-rich region becomes exposed to engage in protein-protein and protein-RNA interactions, allowing physical cross-linking of RNA molecules to form protein-RNA condensates, leading to liquid-liquid phase separation (LLPS). In terms of biological role, scaffold protein that plays an essential role in cytoplasmic stress granule formation which acts as a platform for antiviral signaling. Plays an essential role in stress granule formation. Stress granules are membraneless compartments that store mRNAs and proteins, such as stalled translation pre-initiation complexes, in response to stress. Promotes formation of stress granules phase-separated membraneless compartment by undergoing liquid-liquid phase separation (LLPS) upon unfolded RNA-binding: functions as a molecular switch that triggers RNA-dependent LLPS in response to a rise in intracellular free RNA concentrations. The chain is Ras GTPase-activating protein-binding protein 2 from Homo sapiens (Human).